A 353-amino-acid polypeptide reads, in one-letter code: Holliday junction branch migration complex subunit RuvB (353 aa).

The interval 4–190 (HYIRFKIMTN…FGIPMRLNFY (187 aa)) is large ATPase domain (RuvB-L). Residues I29, R30, G71, K74, T75, T76, 137–139 (EDF), R180, Y190, and R227 each bind ATP. T75 is a Mg(2+) binding site. The small ATPAse domain (RuvB-S) stretch occupies residues 191–261 (NTEELKKVLN…ISDFGLNRLE (71 aa)). A head domain (RuvB-H) region spans residues 264 to 353 (RIGLDSNDYR…HQFNIFNEHE (90 aa)). R300, R319, and R324 together coordinate DNA.

This sequence belongs to the RuvB family. In terms of assembly, homohexamer. Forms an RuvA(8)-RuvB(12)-Holliday junction (HJ) complex. HJ DNA is sandwiched between 2 RuvA tetramers; dsDNA enters through RuvA and exits via RuvB. An RuvB hexamer assembles on each DNA strand where it exits the tetramer. Each RuvB hexamer is contacted by two RuvA subunits (via domain III) on 2 adjacent RuvB subunits; this complex drives branch migration. In the full resolvosome a probable DNA-RuvA(4)-RuvB(12)-RuvC(2) complex forms which resolves the HJ.

The protein resides in the cytoplasm. It carries out the reaction ATP + H2O = ADP + phosphate + H(+). The RuvA-RuvB-RuvC complex processes Holliday junction (HJ) DNA during genetic recombination and DNA repair, while the RuvA-RuvB complex plays an important role in the rescue of blocked DNA replication forks via replication fork reversal (RFR). RuvA specifically binds to HJ cruciform DNA, conferring on it an open structure. The RuvB hexamer acts as an ATP-dependent pump, pulling dsDNA into and through the RuvAB complex. RuvB forms 2 homohexamers on either side of HJ DNA bound by 1 or 2 RuvA tetramers; 4 subunits per hexamer contact DNA at a time. Coordinated motions by a converter formed by DNA-disengaged RuvB subunits stimulates ATP hydrolysis and nucleotide exchange. Immobilization of the converter enables RuvB to convert the ATP-contained energy into a lever motion, pulling 2 nucleotides of DNA out of the RuvA tetramer per ATP hydrolyzed, thus driving DNA branch migration. The RuvB motors rotate together with the DNA substrate, which together with the progressing nucleotide cycle form the mechanistic basis for DNA recombination by continuous HJ branch migration. Branch migration allows RuvC to scan DNA until it finds its consensus sequence, where it cleaves and resolves cruciform DNA. This is Holliday junction branch migration complex subunit RuvB from Rickettsia massiliae (strain Mtu5).